A 417-amino-acid chain; its full sequence is Hydroxysteroid dehydrogenase-like protein 2 (417 aa).

NADP(+)-binding positions include 17–23 (GASRGIG), Lys42, and Asp74. The active-site Proton acceptor is Tyr168. Lys172 serves as a coordination point for NADP(+). An SCP2 domain is found at 306 to 414 (SSPLQETFKA…KLEKILGQMN (109 aa)).

The protein belongs to the short-chain dehydrogenases/reductases (SDR) family.

The protein localises to the peroxisome. It is found in the mitochondrion. Functionally, has apparently no steroid dehydrogenase activity. Might act as a metabolic regulator that affects systemic adaptation to nutritional cues. In Xenopus tropicalis (Western clawed frog), this protein is Hydroxysteroid dehydrogenase-like protein 2 (hsdl2).